The chain runs to 109 residues: Nucleoid-associated protein AHA_2212 (109 aa).

2 disordered regions span residues Met1 to Lys23 and Asn88 to Phe109. The segment covering Met11–Lys23 has biased composition (low complexity).

This sequence belongs to the YbaB/EbfC family. Homodimer.

The protein resides in the cytoplasm. It localises to the nucleoid. Functionally, binds to DNA and alters its conformation. May be involved in regulation of gene expression, nucleoid organization and DNA protection. The protein is Nucleoid-associated protein AHA_2212 of Aeromonas hydrophila subsp. hydrophila (strain ATCC 7966 / DSM 30187 / BCRC 13018 / CCUG 14551 / JCM 1027 / KCTC 2358 / NCIMB 9240 / NCTC 8049).